We begin with the raw amino-acid sequence, 416 residues long: ORC1-type DNA replication protein 9 (416 aa).

Residues 79–83, Tyr-226, and Arg-238 each bind ATP; that span reads SGKSL.

This sequence belongs to the CDC6/cdc18 family.

Functionally, involved in regulation of DNA replication. The protein is ORC1-type DNA replication protein 9 (cdc6i) of Haloarcula marismortui (strain ATCC 43049 / DSM 3752 / JCM 8966 / VKM B-1809) (Halobacterium marismortui).